A 160-amino-acid polypeptide reads, in one-letter code: 6-hydroxypseudooxynicotine dehydrogenase complex subunit beta (160 aa).

The 2Fe-2S ferredoxin-type domain maps to 4–80 (FRLTVEVNGV…NSRIETVESL (77 aa)). Residues C42, C47, C50, C62, C101, C104, C137, and C139 each contribute to the [2Fe-2S] cluster site.

In terms of assembly, heterohexamer of 2 alpha (kdhA), 2 beta (kdhB) and 2 gamma (kdhC) subunit. Dimer of heterotrimers. The cofactor is [2Fe-2S] cluster.

The enzyme catalyses 6-hydroxypseudooxynicotine + A + H2O = 2,6-dihydroxypseudooxynicotine + AH2. It functions in the pathway alkaloid degradation; nicotine degradation. Molybdo-flavoprotein enzyme complex involved in nicotine degradation. The subunit gamma (large subunit) contains the substrate-binding sites, the subunit alpha (medium subunit) binds FAD and the subunit beta (small subunit) has a 2Fe-2S ferredoxin-type domain which binds 2 2Fe-2S clusters. This is 6-hydroxypseudooxynicotine dehydrogenase complex subunit beta (kdhB) from Paenarthrobacter nicotinovorans (Arthrobacter nicotinovorans).